Consider the following 169-residue polypeptide: Endoribonuclease YbeY (169 aa).

His128, His132, and His138 together coordinate Zn(2+).

It belongs to the endoribonuclease YbeY family. It depends on Zn(2+) as a cofactor.

It localises to the cytoplasm. Its function is as follows. Single strand-specific metallo-endoribonuclease involved in late-stage 70S ribosome quality control and in maturation of the 3' terminus of the 16S rRNA. This Cyanothece sp. (strain PCC 7425 / ATCC 29141) protein is Endoribonuclease YbeY.